The following is a 117-amino-acid chain: Non-specific lipid-transfer protein (117 aa).

The N-terminal stretch at 1 to 26 (MASSAVIKLACAVLLCIVVAAPYAEA) is a signal peptide. Disulfide bonds link C30–C76, C40–C53, C54–C99, and C74–C113.

It belongs to the plant LTP family.

In terms of biological role, plant non-specific lipid-transfer proteins transfer phospholipids as well as galactolipids across membranes. May play a role in wax or cutin deposition in the cell walls of expanding epidermal cells and certain secretory tissues. This Spinacia oleracea (Spinach) protein is Non-specific lipid-transfer protein.